Reading from the N-terminus, the 231-residue chain is MVNIEEWQPKTKLGRLVKEGKITNIDEILSNKYVIREPEIVDVLLPNLEVEFMKWRIIRGKFRSKKPYRMAQKKTAEGNKTRYEVIAIVGDKDGHVGVGLGRSSDLLIAREKAINRAKLNIIKVARGCGSWECACGAPHSIPYQVEGKSGSVRVILKPAPKGVGIVADDEIKKIFRLAGIKDVWVRSFGKTKTKMNHVFAVFDALKKLSNVRVQPFFIKFSGYTEGSIINK.

In terms of domain architecture, S5 DRBM spans 61–124 (KFRSKKPYRM…NRAKLNIIKV (64 aa)).

This sequence belongs to the universal ribosomal protein uS5 family. In terms of assembly, part of the 30S ribosomal subunit. Contacts protein S4.

Functionally, with S4 and S12 plays an important role in translational accuracy. This Nanoarchaeum equitans (strain Kin4-M) protein is Small ribosomal subunit protein uS5.